A 248-amino-acid chain; its full sequence is Pyridoxal 4-dehydrogenase (248 aa).

11-35 (LVTGAAQGIGKAIAARLAADGATVI) lines the NAD(+) pocket. A substrate-binding site is contributed by Ser-141. Catalysis depends on Tyr-154, which acts as the Proton acceptor.

The protein belongs to the short-chain dehydrogenases/reductases (SDR) family. As to quaternary structure, homotetramer.

It catalyses the reaction pyridoxal + NAD(+) = 4-pyridoxolactone + NADH + H(+). Its pathway is cofactor degradation; B6 vitamer degradation; 4-pyridoxate from pyridoxal: step 1/2. Involved in the degradation of pyridoxine or pyridoxamine (free, phosphate-unbound, forms of vitamin B6). Oxidizes pyridoxal to 4-pyridoxolactone, but does not have activity toward pyridoxal 5'-phosphate, pyridoxine, pyridoxamine, pyridoxamine 5'-phosphate, 4-phthalaldehyde, 2-nitrobenzaldehyde, pyridine, formaldehyde, 2-carboxybenzaldehyde or sugars. This Mesorhizobium japonicum (strain LMG 29417 / CECT 9101 / MAFF 303099) (Mesorhizobium loti (strain MAFF 303099)) protein is Pyridoxal 4-dehydrogenase.